The sequence spans 174 residues: RNA pyrophosphohydrolase (174 aa).

Residues 6-149 (GFRANVGIVI…KREVYRRAMK (144 aa)) enclose the Nudix hydrolase domain. Residues 38-59 (GGIDEGETAEQTMYRELYEEVG) carry the Nudix box motif.

The protein belongs to the Nudix hydrolase family. RppH subfamily. It depends on a divalent metal cation as a cofactor.

Its function is as follows. Accelerates the degradation of transcripts by removing pyrophosphate from the 5'-end of triphosphorylated RNA, leading to a more labile monophosphorylated state that can stimulate subsequent ribonuclease cleavage. This is RNA pyrophosphohydrolase from Pseudoalteromonas atlantica (strain T6c / ATCC BAA-1087).